The following is a 365-amino-acid chain: Sulfate/thiosulfate import ATP-binding protein CysA (365 aa).

Residues 3–237 form the ABC transporter domain; sequence IEIARIKKSF…PATRFVLEFM (235 aa). Residue 35–42 participates in ATP binding; it reads GPSGSGKT.

This sequence belongs to the ABC transporter superfamily. Sulfate/tungstate importer (TC 3.A.1.6) family. In terms of assembly, the complex is composed of two ATP-binding proteins (CysA), two transmembrane proteins (CysT and CysW) and a solute-binding protein (CysP).

The protein localises to the cell inner membrane. It catalyses the reaction sulfate(out) + ATP + H2O = sulfate(in) + ADP + phosphate + H(+). The enzyme catalyses thiosulfate(out) + ATP + H2O = thiosulfate(in) + ADP + phosphate + H(+). Its function is as follows. Part of the ABC transporter complex CysAWTP involved in sulfate/thiosulfate import. Responsible for energy coupling to the transport system. This chain is Sulfate/thiosulfate import ATP-binding protein CysA, found in Salmonella typhimurium (strain LT2 / SGSC1412 / ATCC 700720).